The following is an 89-amino-acid chain: Small ribosomal subunit protein uS15 (89 aa).

The protein belongs to the universal ribosomal protein uS15 family. Part of the 30S ribosomal subunit. Forms a bridge to the 50S subunit in the 70S ribosome, contacting the 23S rRNA.

One of the primary rRNA binding proteins, it binds directly to 16S rRNA where it helps nucleate assembly of the platform of the 30S subunit by binding and bridging several RNA helices of the 16S rRNA. Its function is as follows. Forms an intersubunit bridge (bridge B4) with the 23S rRNA of the 50S subunit in the ribosome. This is Small ribosomal subunit protein uS15 from Mycolicibacterium vanbaalenii (strain DSM 7251 / JCM 13017 / BCRC 16820 / KCTC 9966 / NRRL B-24157 / PYR-1) (Mycobacterium vanbaalenii).